Here is a 987-residue protein sequence, read N- to C-terminus: Probable outer membrane protein PmpG (987 aa).

The N-terminal stretch at 1–25 (MMQTPFHKFFLLAMLSYSLLQGGHA) is a signal peptide. The 281-residue stretch at 707-987 (GRAYCRGIWI…GLSIGSKIRF (281 aa)) folds into the Autotransporter domain.

This sequence belongs to the PMP outer membrane protein family.

It localises to the secreted. The protein localises to the cell wall. The protein resides in the cell outer membrane. This chain is Probable outer membrane protein PmpG (pmpG), found in Chlamydia muridarum (strain MoPn / Nigg).